A 270-amino-acid polypeptide reads, in one-letter code: Putative pyruvate, phosphate dikinase regulatory protein (270 aa).

Residue 151–158 coordinates ADP; the sequence is GVSRTSKT.

Belongs to the pyruvate, phosphate/water dikinase regulatory protein family. PDRP subfamily.

The catalysed reaction is N(tele)-phospho-L-histidyl/L-threonyl-[pyruvate, phosphate dikinase] + ADP = N(tele)-phospho-L-histidyl/O-phospho-L-threonyl-[pyruvate, phosphate dikinase] + AMP + H(+). The enzyme catalyses N(tele)-phospho-L-histidyl/O-phospho-L-threonyl-[pyruvate, phosphate dikinase] + phosphate + H(+) = N(tele)-phospho-L-histidyl/L-threonyl-[pyruvate, phosphate dikinase] + diphosphate. Bifunctional serine/threonine kinase and phosphorylase involved in the regulation of the pyruvate, phosphate dikinase (PPDK) by catalyzing its phosphorylation/dephosphorylation. The protein is Putative pyruvate, phosphate dikinase regulatory protein of Ligilactobacillus salivarius (strain UCC118) (Lactobacillus salivarius).